A 216-amino-acid polypeptide reads, in one-letter code: FMN-dependent NADH:quinone oxidoreductase (216 aa).

FMN contacts are provided by residues 15–17 and 139–142; these read SVS and SRGG.

It belongs to the azoreductase type 1 family. In terms of assembly, homodimer. It depends on FMN as a cofactor.

It catalyses the reaction 2 a quinone + NADH + H(+) = 2 a 1,4-benzosemiquinone + NAD(+). The enzyme catalyses N,N-dimethyl-1,4-phenylenediamine + anthranilate + 2 NAD(+) = 2-(4-dimethylaminophenyl)diazenylbenzoate + 2 NADH + 2 H(+). Its function is as follows. Quinone reductase that provides resistance to thiol-specific stress caused by electrophilic quinones. Also exhibits azoreductase activity. Catalyzes the reductive cleavage of the azo bond in aromatic azo compounds to the corresponding amines. The sequence is that of FMN-dependent NADH:quinone oxidoreductase from Acidovorax ebreus (strain TPSY) (Diaphorobacter sp. (strain TPSY)).